We begin with the raw amino-acid sequence, 361 residues long: Phosphoserine aminotransferase (361 aa).

R42 contacts L-glutamate. Pyridoxal 5'-phosphate is bound by residues 76–77 (AR), W102, T153, D173, and Q196. Residue K197 is modified to N6-(pyridoxal phosphate)lysine. Pyridoxal 5'-phosphate is bound at residue 238 to 239 (NT).

This sequence belongs to the class-V pyridoxal-phosphate-dependent aminotransferase family. SerC subfamily. Homodimer. Pyridoxal 5'-phosphate serves as cofactor.

The protein resides in the cytoplasm. The enzyme catalyses O-phospho-L-serine + 2-oxoglutarate = 3-phosphooxypyruvate + L-glutamate. The catalysed reaction is 4-(phosphooxy)-L-threonine + 2-oxoglutarate = (R)-3-hydroxy-2-oxo-4-phosphooxybutanoate + L-glutamate. Its pathway is amino-acid biosynthesis; L-serine biosynthesis; L-serine from 3-phospho-D-glycerate: step 2/3. The protein operates within cofactor biosynthesis; pyridoxine 5'-phosphate biosynthesis; pyridoxine 5'-phosphate from D-erythrose 4-phosphate: step 3/5. Its function is as follows. Catalyzes the reversible conversion of 3-phosphohydroxypyruvate to phosphoserine and of 3-hydroxy-2-oxo-4-phosphonooxybutanoate to phosphohydroxythreonine. This chain is Phosphoserine aminotransferase, found in Buchnera aphidicola subsp. Acyrthosiphon pisum (strain 5A).